A 172-amino-acid chain; its full sequence is 3-hydroxydecanoyl-[acyl-carrier-protein] dehydratase (172 aa).

His-71 is a catalytic residue.

Belongs to the thioester dehydratase family. FabA subfamily. Homodimer.

The protein localises to the cytoplasm. The catalysed reaction is a (3R)-hydroxyacyl-[ACP] = a (2E)-enoyl-[ACP] + H2O. It carries out the reaction (3R)-hydroxydecanoyl-[ACP] = (2E)-decenoyl-[ACP] + H2O. The enzyme catalyses (2E)-decenoyl-[ACP] = (3Z)-decenoyl-[ACP]. The protein operates within lipid metabolism; fatty acid biosynthesis. Necessary for the introduction of cis unsaturation into fatty acids. Catalyzes the dehydration of (3R)-3-hydroxydecanoyl-ACP to E-(2)-decenoyl-ACP and then its isomerization to Z-(3)-decenoyl-ACP. Can catalyze the dehydratase reaction for beta-hydroxyacyl-ACPs with saturated chain lengths up to 16:0, being most active on intermediate chain length. This Salmonella arizonae (strain ATCC BAA-731 / CDC346-86 / RSK2980) protein is 3-hydroxydecanoyl-[acyl-carrier-protein] dehydratase.